We begin with the raw amino-acid sequence, 839 residues long: ATP-binding cassette sub-family F member 1 (839 aa).

The interval 1 to 258 (MPKGPKQQPP…KKEKKKLKKQ (258 aa)) is disordered. At serine 22 the chain carries Phosphoserine. A compositionally biased stretch (basic residues) spans 29-39 (KKGKKDKKTKK). Residues 47–64 (VEDKQAGEEEKLQKEKEQ) are compositionally biased toward basic and acidic residues. The span at 71–83 (QKKKRDTRKGRRK) shows a compositional bias: basic residues. Phosphoserine is present on residues serine 105, serine 109, and serine 140. Residues 136-149 (IQDESEEEKEEEEE) show a composition bias toward acidic residues. Positions 150 to 162 (KPVLKPAKPEKNR) are enriched in basic and acidic residues. A Phosphothreonine modification is found at threonine 195. Position 197 is a phosphoserine (serine 197). A compositionally biased stretch (basic and acidic residues) spans 206–223 (TKEKEPPRPGKDKDKKGA). Serine 227 carries the phosphoserine modification. Basic residues predominate over residues 247–256 (LSKKEKKKLK). One can recognise an ABC transporter 1 domain in the interval 298–542 (IKLEKFSISA…MYQQKQKELL (245 aa)). 330–337 (GPNGKGKT) contributes to the ATP binding site. The segment covering 553 to 574 (KELKAGGKSTKQAEKQTKEVLT) has biased composition (basic and acidic residues). Residues 553–600 (KELKAGGKSTKQAEKQTKEVLTRKQQKCRRKNQDEESQDPPELLKRPR) form a disordered region. Position 589 is a phosphoserine (serine 589). The ABC transporter 2 domain maps to 619–834 (LGLHGVTFGY…VLEALGEVMV (216 aa)). 652 to 659 (GPNGVGKS) contributes to the ATP binding site.

Interacts (via N-terminus) with EIF2S1; the interaction is independent of its phosphorylated status. Associates (via both ABC transporter domains) with the ribosomes. Post-translationally, phosphorylated at phosphoserine and phosphothreonine. Phosphorylation on Ser-109 and Ser-140 by CK2; inhibits association of EIF2 with ribosomes.

It localises to the cytoplasm. Its subcellular location is the nucleus. It is found in the nucleoplasm. The protein resides in the nucleus envelope. In terms of biological role, required for efficient Cap- and IRES-mediated mRNA translation initiation. Not involved in the ribosome biogenesis. The protein is ATP-binding cassette sub-family F member 1 (Abcf1) of Rattus norvegicus (Rat).